The following is a 359-amino-acid chain: Membrane-bound lytic murein transglycosylase C (359 aa).

The N-terminal stretch at 1 to 16 (MKKYLALALIAPLLIS) is a signal peptide. Residue cysteine 17 is the site of N-palmitoyl cysteine attachment. Cysteine 17 carries S-diacylglycerol cysteine lipidation.

This sequence belongs to the transglycosylase Slt family.

Its subcellular location is the cell outer membrane. It carries out the reaction Exolytic cleavage of the (1-&gt;4)-beta-glycosidic linkage between N-acetylmuramic acid (MurNAc) and N-acetylglucosamine (GlcNAc) residues in peptidoglycan, from either the reducing or the non-reducing ends of the peptidoglycan chains, with concomitant formation of a 1,6-anhydrobond in the MurNAc residue.. Murein-degrading enzyme. May play a role in recycling of muropeptides during cell elongation and/or cell division. In Escherichia coli O157:H7, this protein is Membrane-bound lytic murein transglycosylase C.